A 354-amino-acid chain; its full sequence is MSRLLHAEEWAEVKELGDHHRQPQPHHLPQPPPPPQPPATLQAREHPVYPPELSLLDSTDPRAWLAPTLQGICTARAAQYLLHSPELGASEAAAPRDEVDGRGELVRRSSGGASSSKSPGPVKVREQLCKLKGGVVVDELGCSRQRAPSSKQVNGVQKQRRLAANARERRRMHGLNHAFDQLRNVIPSFNNDKKLSKYETLQMAQIYINALSELLQTPSGGEQPPPPPASCKSDHHHLRTAASYEGGAGNATAAGAQQASGGSQRPTPPGSCRTRFSAPASAGGYSVQLDALHFSTFEDSALTAMMAQKNLSPSLPGSILQPVQEENSKTSPRSHRSDGEFSPHSHYSDSDEAS.

Positions 1-21 (MSRLLHAEEWAEVKELGDHHR) are enriched in basic and acidic residues. Disordered regions lie at residues 1–55 (MSRL…ELSL) and 91–122 (EAAA…PGPV). Residues 26 to 38 (HHLPQPPPPPQPP) show a composition bias toward pro residues. Basic and acidic residues predominate over residues 94–107 (APRDEVDGRGELVR). Positions 108–122 (RSSGGASSSKSPGPV) are enriched in low complexity. The bHLH domain maps to 159-211 (QRRLAANARERRRMHGLNHAFDQLRNVIPSFNNDKKLSKYETLQMAQIYINAL). Disordered regions lie at residues 216-277 (QTPS…TRFS) and 312-354 (SPSL…DEAS). Over residues 250–264 (NATAAGAQQASGGSQ) the composition is skewed to low complexity. The segment covering 335–354 (HRSDGEFSPHSHYSDSDEAS) has biased composition (basic and acidic residues).

As to quaternary structure, efficient DNA binding requires dimerization with another bHLH protein.

Its subcellular location is the nucleus. Transcriptional regulator. Activates E box-dependent transcription in collaboration with TCF3/E47, but the activity is completely antagonized by the negative regulator of neurogenesis HES1. Plays a role in the differentiation of subsets of neural cells by activating E box-dependent transcription. The chain is Transcription factor ATOH1 from Homo sapiens (Human).